A 206-amino-acid chain; its full sequence is Small ribosomal subunit protein uS5 (206 aa).

Polar residues predominate over residues 1 to 15; the sequence is MTDTPTKQEIQSKND. Residues 1–50 form a disordered region; that stretch reads MTDTPTKQEIQSKNDNVPAATPVEQKKNNRNDRKRNRRGDSKNLERDSDW. Residues 38 to 50 are compositionally biased toward basic and acidic residues; that stretch reads RGDSKNLERDSDW. The S5 DRBM domain occupies 50-113; sequence WQERVVQIRR…SDGKKNLVRV (64 aa).

This sequence belongs to the universal ribosomal protein uS5 family. Part of the 30S ribosomal subunit. Contacts proteins S4 and S8.

Its function is as follows. With S4 and S12 plays an important role in translational accuracy. Located at the back of the 30S subunit body where it stabilizes the conformation of the head with respect to the body. This is Small ribosomal subunit protein uS5 from Prochlorococcus marinus (strain AS9601).